A 216-amino-acid polypeptide reads, in one-letter code: Capsule polysaccharide export ATP-binding protein CtrD (216 aa).

The 214-residue stretch at 2–215 folds into the ABC transporter domain; the sequence is ISVEHVSKRY…DKAYEYYNSL (214 aa). 38 to 45 provides a ligand contact to ATP; the sequence is GRNGAGKS.

It belongs to the ABC transporter superfamily.

It localises to the cell inner membrane. It carries out the reaction ATP + H2O + capsular polysaccharide-[capsular polysaccharide-binding protein]Side 1 = ADP + phosphate + capsular polysaccharideSide 2 + [capsular polysaccharide-binding protein]Side 1.. In terms of biological role, putative ATP-binding protein, and an energy-coupling component of capsule polysaccharide export apparatus. In Neisseria meningitidis serogroup B (strain ATCC BAA-335 / MC58), this protein is Capsule polysaccharide export ATP-binding protein CtrD (ctrD).